We begin with the raw amino-acid sequence, 181 residues long: MASSMLSSAAVVTSPAQATMVAPFTGLKSSSAFPVTRKANNDITSIVSNGGRVSCMKVWPPVGKKKFETLSYLPDLTEVELGKEVDYLLRNKWIPCVEFELEHGFVYREHGSTPGYYDGRYWTMWKLPLFGCTDSAQVLKEVQECKTEYPNAFIRIIGFDNNRQVQCISFIAYKPPSFTGA.

The transit peptide at 1-54 (MASSMLSSAAVVTSPAQATMVAPFTGLKSSSAFPVTRKANNDITSIVSNGGRVS) directs the protein to the chloroplast.

It belongs to the RuBisCO small chain family. In terms of assembly, heterohexadecamer of 8 large and 8 small subunits.

It localises to the plastid. The protein resides in the chloroplast. Functionally, ruBisCO catalyzes two reactions: the carboxylation of D-ribulose 1,5-bisphosphate, the primary event in carbon dioxide fixation, as well as the oxidative fragmentation of the pentose substrate. Both reactions occur simultaneously and in competition at the same active site. Although the small subunit is not catalytic it is essential for maximal activity. This Brassica napus (Rape) protein is Ribulose bisphosphate carboxylase small subunit, chloroplastic 1.